A 384-amino-acid polypeptide reads, in one-letter code: F-box only protein 5-B (384 aa).

Disordered stretches follow at residues M1–A20 and D79–S106. A compositionally biased stretch (low complexity) spans P9–S19. Residues S83 to P99 are compositionally biased toward polar residues. The F-box domain occupies A191–Y238. Residues S311–S359 form a ZBR-type zinc finger. Positions 315, 318, 333, 338, 343, 346, 351, and 356 each coordinate Zn(2+).

In terms of assembly, part of a SCF (SKP1-cullin-F-box) protein ligase complex. Interacts with btrc. Interacts with skp1. Interacts with cdc20. Interacts with pin1; stabilizes fbxo5 by preventing its association with btrc in an isomerization-dependent pathway; this interaction is present during G2 phase and prevents fbxo5 degradation. Interacts with plk1. In terms of processing, proteolysed; proteolysis is induced by both cyclin B-cdk1 and cyclin A-cdk1/2 complex through probable phosphorylation. Proteolysis is inhibited by pin1 during G2.

The protein localises to the nucleus. It is found in the cytoplasm. It localises to the cytoskeleton. Its subcellular location is the spindle. The protein resides in the microtubule organizing center. The protein localises to the centrosome. It participates in protein modification; protein ubiquitination. In terms of biological role, regulates progression through early mitosis by inhibiting the anaphase promoting complex/cyclosome (APC). Binds to the APC activators cdc20 to prevent APC activation. Can also bind directly to the APC to inhibit substrate-binding. Required to arrest unfertilized eggs at metaphase of meiosis II, by preventing their release from metaphase of meiosis II, through inhibition of APC-dependent cyclin B destruction leading to stabilization of cyclin B-cdk1 complex activity. This Xenopus laevis (African clawed frog) protein is F-box only protein 5-B (fbxo5-b).